Consider the following 2261-residue polypeptide: Phospholipid-transporting ATPase ABCA1 (2261 aa).

Cys3 is lipidated: S-palmitoyl cysteine. N-linked (GlcNAc...) asparagine glycosylation is present at Asn14. Residues 22 to 42 (TCQLLLEVAWPLFIFLILISV) form a helical membrane-spanning segment. A lipid anchor (S-palmitoyl cysteine) is attached at Cys23. The Extracellular portion of the chain corresponds to 43–639 (RLSYPPYEQH…DIFLRVMSRS (597 aa)). Positions 69-80 (WVQGIICNANNP) are annulus domain 1. A disulfide bridge links Cys75 with Cys309. 8 N-linked (GlcNAc...) asparagine glycosylation sites follow: Asn98, Asn151, Asn161, Asn196, Asn244, Asn292, Asn337, and Asn349. The tract at residues 368–379 (SRIIWKALKPLL) is annulus domain 2. Asn400, Asn478, Asn489, and Asn521 each carry an N-linked (GlcNAc...) asparagine glycan. The interval 564–594 (ERTNKIKDGYWDPGPRADPFEDMRYVWGGFA) is gateway domain. 5 helical membrane-spanning segments follow: residues 640-660 (MPLF…KGIV), 683-703 (FSWF…LVVI), 716-736 (SVVF…CFLI), 745-765 (LAAA…VLCV), and 777-797 (IFAS…FALF). N-linked (GlcNAc...) asparagine glycosylation occurs at Asn820. A helical transmembrane segment spans residues 827 to 847 (MMLFDTFLYGVMTWYIEAVFP). Residues 899–1131 (VSIQNLVKVY…LGTGYYLTLV (233 aa)) form the ABC transporter 1 domain. 933-940 (GHNGAGKT) is a binding site for ATP. A helical transmembrane segment spans residues 1041 to 1057 (LSVALAFVGGSKVVILD). Residue Ser1042 is modified to Phosphoserine; by PKA. 2 S-palmitoyl cysteine lipidation sites follow: Cys1110 and Cys1111. 2 N-linked (GlcNAc...) asparagine glycosylation sites follow: Asn1144 and Asn1294. The segment at 1283 to 1312 (RPFTEDDAADPNDSDIDPESRETDLLSGMD) is disordered. Over residues 1287 to 1299 (EDDAADPNDSDID) the composition is skewed to acidic residues. Residue Ser1296 is modified to Phosphoserine. The chain crosses the membrane as a helical span at residues 1351–1371 (IVLPAVFVCIALVFSLIVPPF). Over 1372–1656 (GKYPSLELQP…ALMTTSVDVL (285 aa)) the chain is Extracellular. The N-linked (GlcNAc...) asparagine glycan is linked to Asn1453. A disulfide bridge links Cys1463 with Cys1477. Asn1504 and Asn1637 each carry an N-linked (GlcNAc...) asparagine glycan. Transmembrane regions (helical) follow at residues 1657–1677 (VSIC…VFLI), 1703–1723 (FVWD…IFIC), 1735–1755 (LPVL…LMYP), 1768–1788 (VVLT…TFVL), 1802–1822 (ILKS…LIDM), and 1852–1872 (NLFA…LIQY). Residues 1912 to 2144 (LEIKELTKIY…FGDGYTIVVR (233 aa)) enclose the ABC transporter 2 domain. Position 1946–1953 (1946–1953 (GVNGAGKS)) interacts with ATP. N-linked (GlcNAc...) asparagine glycosylation is present at Asn2044. Phosphoserine; by PKA is present on Ser2054. Residue Asn2238 is glycosylated (N-linked (GlcNAc...) asparagine).

Belongs to the ABC transporter superfamily. ABCA family. As to quaternary structure, interacts with MEGF10. May interact with APOE1; functionally associated with APOE1 in the biogenesis of HDLs. Interacts with ABCA8; this interaction potentiates cholesterol efflux. Interacts with ABCA12 and NR1H2; this interaction is required for ABCA1 localization to the cell surface and is necessary for its normal activity and stability. In terms of processing, phosphorylation on Ser-2054 regulates phospholipid efflux. Post-translationally, palmitoylated by ZDHHC8. Palmitoylation is essential for localization to the plasma membrane. Widely expressed, but most abundant in macrophages.

It localises to the cell membrane. The protein resides in the endosome. It carries out the reaction ATP + H2O + phospholipidSide 1 = ADP + phosphate + phospholipidSide 2.. It catalyses the reaction a 1,2-diacyl-sn-glycero-3-phosphocholine(out) + ATP + H2O = a 1,2-diacyl-sn-glycero-3-phosphocholine(in) + ADP + phosphate + H(+). The enzyme catalyses a 1,2-diacyl-sn-glycero-3-phospho-L-serine(out) + ATP + H2O = a 1,2-diacyl-sn-glycero-3-phospho-L-serine(in) + ADP + phosphate + H(+). The catalysed reaction is a sphingomyelin(in) + ATP + H2O = a sphingomyelin(out) + ADP + phosphate + H(+). It carries out the reaction cholesterol(in) + ATP + H2O = cholesterol(out) + ADP + phosphate + H(+). Its activity is regulated as follows. ATPase activity is decreased by cholesterol and ceramide. ATPase activity is stimulated by phosphatidylcholine and to a lesser degree by phosphatidylserine and sphingomyelin. Phospholipid translocase activity is highly reduced by berylium fluoride and aluminum flouride and reduced by N-ethylmaleimide. In terms of biological role, catalyzes the translocation of specific phospholipids from the cytoplasmic to the extracellular/lumenal leaflet of membrane coupled to the hydrolysis of ATP. Thereby, participates in phospholipid transfer to apolipoproteins to form nascent high density lipoproteins/HDLs. Transports preferentially phosphatidylcholine over phosphatidylserine. May play a similar role in the efflux of intracellular cholesterol to apolipoproteins and the formation of nascent high density lipoproteins/HDLs. Translocates phospholipids from the outer face of the plasma membrane and forces it through its gateway and annulus into an elongated hydrophobic tunnel in its extracellular domain. This chain is Phospholipid-transporting ATPase ABCA1, found in Homo sapiens (Human).